A 102-amino-acid chain; its full sequence is Small ribosomal subunit protein eS24 (102 aa).

It belongs to the eukaryotic ribosomal protein eS24 family.

The sequence is that of Small ribosomal subunit protein eS24 (rps24e) from Haloarcula marismortui (strain ATCC 43049 / DSM 3752 / JCM 8966 / VKM B-1809) (Halobacterium marismortui).